Consider the following 313-residue polypeptide: Ribosomal RNA small subunit methyltransferase H (313 aa).

Residues 35–37 (GGH), Asp55, Phe79, Asp101, and Gln108 each bind S-adenosyl-L-methionine.

Belongs to the methyltransferase superfamily. RsmH family.

The protein resides in the cytoplasm. It catalyses the reaction cytidine(1402) in 16S rRNA + S-adenosyl-L-methionine = N(4)-methylcytidine(1402) in 16S rRNA + S-adenosyl-L-homocysteine + H(+). Specifically methylates the N4 position of cytidine in position 1402 (C1402) of 16S rRNA. This is Ribosomal RNA small subunit methyltransferase H from Klebsiella pneumoniae subsp. pneumoniae (strain ATCC 700721 / MGH 78578).